A 296-amino-acid polypeptide reads, in one-letter code: tRNA dimethylallyltransferase (296 aa).

9–16 contributes to the ATP binding site; the sequence is GPTAVGKT. 11–16 contacts substrate; sequence TAVGKT. The interval 34 to 37 is interaction with substrate tRNA; that stretch reads DSRQ.

The protein belongs to the IPP transferase family. As to quaternary structure, monomer. The cofactor is Mg(2+).

The enzyme catalyses adenosine(37) in tRNA + dimethylallyl diphosphate = N(6)-dimethylallyladenosine(37) in tRNA + diphosphate. Functionally, catalyzes the transfer of a dimethylallyl group onto the adenine at position 37 in tRNAs that read codons beginning with uridine, leading to the formation of N6-(dimethylallyl)adenosine (i(6)A). The chain is tRNA dimethylallyltransferase from Chloroflexus aurantiacus (strain ATCC 29366 / DSM 635 / J-10-fl).